We begin with the raw amino-acid sequence, 366 residues long: Cell division protein FtsZ 1 (366 aa).

GTP contacts are provided by residues 45 to 49, 132 to 134, Glu163, Arg167, and Asp210; these read GAGCN and GTG. Over residues 344-354 the composition is skewed to acidic residues; the sequence is PEEETPLETPE. The disordered stretch occupies residues 344 to 366; it reads PEEETPLETPEESPSIEISIPEL. Low complexity predominate over residues 355-366; it reads ESPSIEISIPEL.

This sequence belongs to the FtsZ family. In terms of assembly, homodimer. Polymerizes to form a dynamic ring structure in a strictly GTP-dependent manner. Interacts directly with several other division proteins.

It localises to the cytoplasm. In terms of biological role, essential cell division protein that forms a contractile ring structure (Z ring) at the future cell division site. The regulation of the ring assembly controls the timing and the location of cell division. One of the functions of the FtsZ ring is to recruit other cell division proteins to the septum to produce a new cell wall between the dividing cells. Binds GTP and shows GTPase activity. In Pyrococcus woesei, this protein is Cell division protein FtsZ 1.